A 547-amino-acid polypeptide reads, in one-letter code: Probable FMN/FAD exporter YeeO (547 aa).

11 consecutive transmembrane segments (helical) span residues 94–114 (ITPLAVPIFMENACVLLMGVL), 139–159 (VIMAFFAAIDLGTTVVVAFSL), 174–194 (SLVIMTLFAVLLATLIHHFGE), 211–231 (LALTYLELTVLSYPAAAITLI), 246–268 (LLINGSLNILNIIISGILIYGLF), 281–301 (GLTISRYIGAVAILWVLAIGF), 318–338 (FSIIWEVMGIGIPASVESVLF), 350–370 (AGMGTSVIAGNFIAFSIAALI), 404–424 (VFWLSTLGLTAIAWLTAPFAG), 439–459 (VVVILIWLNALFMPIWSASWV), and 486–506 (VVVGYVLGIMLGWGVVGVWMG).

Belongs to the multi antimicrobial extrusion (MATE) (TC 2.A.66.1) family.

It is found in the cell inner membrane. Its function is as follows. A transporter able to export peptides and flavins. When overexpressed allows cells deleted for multiple peptidases (pepA, pepB, pepD and pepN) to grow in the presence of dipeptides Ala-Gln or Gly-Tyr which otherwise inhibit growth. Cells overexpressing this protein have decreased intracellular levels of Ala-Gln dipeptide, and in a system that produces the Ala-Gln dipeptide, overproduction of this protein increases its export. When overexpressed increases secretion of FMN and FAD but not riboflavin; intracellular concentrations of FMN and riboflavin rise, possibly to compensate for increased secretion. Increased overexpression causes slight cell elongation. The sequence is that of Probable FMN/FAD exporter YeeO (yeeO) from Escherichia coli (strain K12).